Consider the following 92-residue polypeptide: Small ribosomal subunit protein uS19 (92 aa).

It belongs to the universal ribosomal protein uS19 family.

Its function is as follows. Protein S19 forms a complex with S13 that binds strongly to the 16S ribosomal RNA. In Azorhizobium caulinodans (strain ATCC 43989 / DSM 5975 / JCM 20966 / LMG 6465 / NBRC 14845 / NCIMB 13405 / ORS 571), this protein is Small ribosomal subunit protein uS19.